Consider the following 298-residue polypeptide: Bifunctional protein FolD (298 aa).

NADP(+) contacts are provided by residues 166–168 (GRS), Ser-191, and Ile-232.

Belongs to the tetrahydrofolate dehydrogenase/cyclohydrolase family. Homodimer.

It catalyses the reaction (6R)-5,10-methylene-5,6,7,8-tetrahydrofolate + NADP(+) = (6R)-5,10-methenyltetrahydrofolate + NADPH. The catalysed reaction is (6R)-5,10-methenyltetrahydrofolate + H2O = (6R)-10-formyltetrahydrofolate + H(+). Its pathway is one-carbon metabolism; tetrahydrofolate interconversion. Catalyzes the oxidation of 5,10-methylenetetrahydrofolate to 5,10-methenyltetrahydrofolate and then the hydrolysis of 5,10-methenyltetrahydrofolate to 10-formyltetrahydrofolate. In Parvibaculum lavamentivorans (strain DS-1 / DSM 13023 / NCIMB 13966), this protein is Bifunctional protein FolD.